The following is a 149-amino-acid chain: Transcriptional repressor NrdR (149 aa).

Residues 3-34 (CPFCGANDTKVIDSRLVADGHQVRRRRQCLAC) fold into a zinc finger. Residues 49-139 (PRVIKTDGNR…VYRSFEDIRE (91 aa)) form the ATP-cone domain.

The protein belongs to the NrdR family. The cofactor is Zn(2+).

In terms of biological role, negatively regulates transcription of bacterial ribonucleotide reductase nrd genes and operons by binding to NrdR-boxes. This Photobacterium profundum (strain SS9) protein is Transcriptional repressor NrdR.